A 158-amino-acid polypeptide reads, in one-letter code: MSPGRASSVSLMLLLLLSLAATVKAAAIIPQSSACPNTEAKDFLQNVKVNLKVFNSLGAKVSSRRPSDYLNRSTSPWTLHRNEDPDRYPSVIWEAQCRHQRCVNAEGKLDHHMNSVLIQQEILVLKREPESCPFTFRVEKMLVGVGCTCVASIVRQAA.

The N-terminal stretch at Met-1–Ala-25 is a signal peptide. Asn-71 carries an N-linked (GlcNAc...) asparagine glycan. 2 disulfide bridges follow: Cys-97–Cys-147 and Cys-102–Cys-149.

This sequence belongs to the IL-17 family. As to quaternary structure, homodimer. Forms complexes with IL17RA and IL17RC receptors with 2:1 binding stoichiometry: two receptor chains for one interleukin molecule. IL17A homodimer preferentially drives the formation of IL17RA-IL17RC heterodimeric receptor complex. IL17A homodimer adopts an asymmetrical ternary structure with one IL17RA molecule, allowing for high affinity interactions of one IL17A monomer with one IL17RA molecule (via D1 and D2 domains), while disfavoring binding of a second IL17RA molecule on the other IL17A monomer. Heterodimer with IL17F. IL17A-IL17F forms complexes with IL17RA-IL17RC, but with lower affinity when compared to IL17A homodimer. IL17RA and IL17RC chains cannot distinguish between IL17A and IL17F molecules, potentially enabling the formation of topologically distinct complexes. Expressed by Th17 cell lineage (at protein level). The expression pattern reflects the differentiation state, with IL17A-IL17F heterodimers produced at higher levels than IL17A-IL17A and IL17F-IL17F dimers in fully differentiated Th17 cells. Expressed in innate lymphoid cells (at protein level). Expressed in gamma-delta T cell subsets (at protein level). Expressed in iNKT cells (at protein level).

The protein resides in the secreted. Effector cytokine of innate and adaptive immune system involved in antimicrobial host defense and maintenance of tissue integrity. Signals via IL17RA-IL17RC heterodimeric receptor complex, triggering homotypic interaction of IL17RA and IL17RC chains with TRAF3IP2 adapter. This leads to downstream TRAF6-mediated activation of NF-kappa-B and MAPkinase pathways ultimately resulting in transcriptional activation of cytokines, chemokines, antimicrobial peptides and matrix metalloproteinases, with potential strong immune inflammation. Plays an important role in connecting T cell-mediated adaptive immunity and acute inflammatory response to destroy extracellular bacteria and fungi. As a signature effector cytokine of T-helper 17 cells (Th17), primarily induces neutrophil activation and recruitment at infection and inflammatory sites. In airway epithelium, mediates neutrophil chemotaxis via induction of CXCL1 and CXCL5 chemokines. In secondary lymphoid organs, contributes to germinal center formation by regulating the chemotactic response of B cells to CXCL12 and CXCL13, enhancing retention of B cells within the germinal centers, B cell somatic hypermutation rate and selection toward plasma cells. Effector cytokine of a subset of gamma-delta T cells that functions as part of an inflammatory circuit downstream IL1B, TLR2 and IL23A-IL12B to promote neutrophil recruitment for efficient bacterial clearance. Effector cytokine of innate immune cells including invariant natural killer cell (iNKT) and group 3 innate lymphoid cells that mediate initial neutrophilic inflammation. Involved in the maintenance of the integrity of epithelial barriers during homeostasis and pathogen infection. Upon acute injury, has a direct role in epithelial barrier formation by regulating OCLN localization and tight junction biogenesis. As part of the mucosal immune response induced by commensal bacteria, enhances host's ability to resist pathogenic bacterial and fungal infections by promoting neutrophil recruitment and antimicrobial peptides release. In synergy with IL17F, mediates the production of antimicrobial beta-defensins DEFB1, DEFB103A, and DEFB104A by mucosal epithelial cells, limiting the entry of microbes through the epithelial barriers. Involved in antiviral host defense through various mechanisms. Enhances immunity against West Nile virus by promoting T cell cytotoxicity. May play a beneficial role in influenza A virus (H5N1) infection by enhancing B cell recruitment and immune response in the lung. Contributes to influenza A virus (H1N1) clearance by driving the differentiation of B-1a B cells, providing for production of virus-specific IgM antibodies at first line of host defense. This Mus musculus (Mouse) protein is Interleukin-17A (Il17a).